Consider the following 155-residue polypeptide: MTLKRNGNDAPLRIVRLDKELPLPRRAHPTDAGIDLYTAQDVTIAPGCRELVGTGIAIALPVGTVGLVHPRSGLALKKGLSIVNAPGTIDADYRGEIKVCLINLDPEEPIELARGERIAQLLVQEVSLCDVEEVNSVEELGVTVRGESGYGSTGV.

Residues 71-73 (RSG), Asn-84, 88-90 (TID), and Lys-98 each bind substrate.

It belongs to the dUTPase family. Mg(2+) is required as a cofactor.

The enzyme catalyses dUTP + H2O = dUMP + diphosphate + H(+). It participates in pyrimidine metabolism; dUMP biosynthesis; dUMP from dCTP (dUTP route): step 2/2. This enzyme is involved in nucleotide metabolism: it produces dUMP, the immediate precursor of thymidine nucleotides and it decreases the intracellular concentration of dUTP so that uracil cannot be incorporated into DNA. This chain is Deoxyuridine 5'-triphosphate nucleotidohydrolase, found in Corynebacterium jeikeium (strain K411).